Here is a 125-residue protein sequence, read N- to C-terminus: Large ribosomal subunit protein bL12 (125 aa).

It belongs to the bacterial ribosomal protein bL12 family. Homodimer. Part of the ribosomal stalk of the 50S ribosomal subunit. Forms a multimeric L10(L12)X complex, where L10 forms an elongated spine to which 2 to 4 L12 dimers bind in a sequential fashion. Binds GTP-bound translation factors.

Its function is as follows. Forms part of the ribosomal stalk which helps the ribosome interact with GTP-bound translation factors. Is thus essential for accurate translation. The polypeptide is Large ribosomal subunit protein bL12 (Nitrobacter winogradskyi (strain ATCC 25391 / DSM 10237 / CIP 104748 / NCIMB 11846 / Nb-255)).